We begin with the raw amino-acid sequence, 142 residues long: ATP synthase epsilon chain (142 aa).

The protein belongs to the ATPase epsilon chain family. In terms of assembly, F-type ATPases have 2 components, CF(1) - the catalytic core - and CF(0) - the membrane proton channel. CF(1) has five subunits: alpha(3), beta(3), gamma(1), delta(1), epsilon(1). CF(0) has three main subunits: a, b and c.

The protein localises to the cell inner membrane. Its function is as follows. Produces ATP from ADP in the presence of a proton gradient across the membrane. This is ATP synthase epsilon chain from Shewanella loihica (strain ATCC BAA-1088 / PV-4).